Reading from the N-terminus, the 415-residue chain is Gamma-glutamyl phosphate reductase (415 aa).

Belongs to the gamma-glutamyl phosphate reductase family.

It localises to the cytoplasm. The enzyme catalyses L-glutamate 5-semialdehyde + phosphate + NADP(+) = L-glutamyl 5-phosphate + NADPH + H(+). Its pathway is amino-acid biosynthesis; L-proline biosynthesis; L-glutamate 5-semialdehyde from L-glutamate: step 2/2. Functionally, catalyzes the NADPH-dependent reduction of L-glutamate 5-phosphate into L-glutamate 5-semialdehyde and phosphate. The product spontaneously undergoes cyclization to form 1-pyrroline-5-carboxylate. This chain is Gamma-glutamyl phosphate reductase, found in Xylella fastidiosa (strain 9a5c).